The chain runs to 508 residues: Photosystem II CP47 reaction center protein (508 aa).

The next 6 helical transmembrane spans lie at 21 to 36 (AVHIMHTALVAGWAGS), 101 to 115 (IVFSGLCFLAAIWHW), 140 to 156 (GIHLFLSGVACFGFGAF), 203 to 218 (IAAGTLGILAGLFHLS), 237 to 252 (VLSSSIAAVFFAAFVV), and 457 to 472 (SFALLFFFGHIWHGAR).

This sequence belongs to the PsbB/PsbC family. PsbB subfamily. PSII is composed of 1 copy each of membrane proteins PsbA, PsbB, PsbC, PsbD, PsbE, PsbF, PsbH, PsbI, PsbJ, PsbK, PsbL, PsbM, PsbT, PsbX, PsbY, PsbZ, Psb30/Ycf12, at least 3 peripheral proteins of the oxygen-evolving complex and a large number of cofactors. It forms dimeric complexes. Binds multiple chlorophylls. PSII binds additional chlorophylls, carotenoids and specific lipids. is required as a cofactor.

It localises to the plastid. It is found in the chloroplast thylakoid membrane. In terms of biological role, one of the components of the core complex of photosystem II (PSII). It binds chlorophyll and helps catalyze the primary light-induced photochemical processes of PSII. PSII is a light-driven water:plastoquinone oxidoreductase, using light energy to abstract electrons from H(2)O, generating O(2) and a proton gradient subsequently used for ATP formation. This Buxus microphylla (Littleleaf boxwood) protein is Photosystem II CP47 reaction center protein.